Here is a 527-residue protein sequence, read N- to C-terminus: Amine oxidase [flavin-containing] A (527 aa).

Position 1 is an N-acetylmethionine (Met1). Over Met1–Ser497 the chain is Cytoplasmic. Position 383 is a phosphoserine (Ser383). An S-8alpha-FAD cysteine modification is found at Cys406. A helical; Anchor for type IV membrane protein transmembrane segment spans residues Val498–Leu518. The Mitochondrial intermembrane segment spans residues Tyr519–Ser527. The segment at Lys520–Lys522 is interaction with membrane phospholipid headgroups.

This sequence belongs to the flavin monoamine oxidase family. Monomer, homo- or heterodimer (containing two subunits of similar size). Each subunit contains a covalently bound flavin. Enzymatically active as monomer. It depends on FAD as a cofactor.

It localises to the mitochondrion outer membrane. The catalysed reaction is a secondary aliphatic amine + O2 + H2O = a primary amine + an aldehyde + H2O2. It carries out the reaction a primary methyl amine + O2 + H2O = an aldehyde + H2O2 + NH4(+). It catalyses the reaction (R)-adrenaline + O2 + H2O = (R)-3,4-dihydroxymandelaldehyde + methylamine + H2O2. The enzyme catalyses dopamine + O2 + H2O = 3,4-dihydroxyphenylacetaldehyde + H2O2 + NH4(+). The catalysed reaction is tyramine + O2 + H2O = (4-hydroxyphenyl)acetaldehyde + H2O2 + NH4(+). It carries out the reaction (R)-noradrenaline + O2 + H2O = (R)-3,4-dihydroxymandelaldehyde + H2O2 + NH4(+). It catalyses the reaction serotonin + O2 + H2O = (5-hydroxyindol-3-yl)acetaldehyde + H2O2 + NH4(+). The enzyme catalyses kynuramine + O2 + H2O = 3-(2-aminophenyl)-3-oxopropanal + H2O2 + NH4(+). The catalysed reaction is tryptamine + O2 + H2O = indole-3-acetaldehyde + H2O2 + NH4(+). It carries out the reaction 2-phenylethylamine + O2 + H2O = 2-phenylacetaldehyde + H2O2 + NH4(+). Catalyzes the oxidative deamination of primary and some secondary amine such as neurotransmitters, with concomitant reduction of oxygen to hydrogen peroxide and has important functions in the metabolism of neuroactive and vasoactive amines in the central nervous system and peripheral tissues. Preferentially oxidizes serotonin. Also catalyzes the oxidative deamination of kynuramine to 3-(2-aminophenyl)-3-oxopropanal that can spontaneously condense to 4-hydroxyquinoline. The sequence is that of Amine oxidase [flavin-containing] A from Pongo abelii (Sumatran orangutan).